The sequence spans 198 residues: Photosystem I assembly protein Ycf4 (198 aa).

The segment at 1 to 20 is disordered; sequence MTASTTINKGDSPNGDSSAS. Helical transmembrane passes span 36-58 and 78-100; these read YWWA…SSYL and LVMG…VILW.

Belongs to the Ycf4 family.

It localises to the cellular thylakoid membrane. Functionally, seems to be required for the assembly of the photosystem I complex. The polypeptide is Photosystem I assembly protein Ycf4 (Nostoc sp. (strain PCC 7120 / SAG 25.82 / UTEX 2576)).